The following is a 245-amino-acid chain: Phosphoadenosine 5'-phosphosulfate reductase (245 aa).

Catalysis depends on Cys239, which acts as the Nucleophile; cysteine thiosulfonate intermediate.

The protein belongs to the PAPS reductase family. CysH subfamily.

The protein localises to the cytoplasm. It carries out the reaction [thioredoxin]-disulfide + sulfite + adenosine 3',5'-bisphosphate + 2 H(+) = [thioredoxin]-dithiol + 3'-phosphoadenylyl sulfate. It functions in the pathway sulfur metabolism; hydrogen sulfide biosynthesis; sulfite from sulfate: step 3/3. Catalyzes the formation of sulfite from phosphoadenosine 5'-phosphosulfate (PAPS) using thioredoxin as an electron donor. This Shewanella oneidensis (strain ATCC 700550 / JCM 31522 / CIP 106686 / LMG 19005 / NCIMB 14063 / MR-1) protein is Phosphoadenosine 5'-phosphosulfate reductase.